Here is a 241-residue protein sequence, read N- to C-terminus: E3 ubiquitin-protein ligase RNF166 (241 aa).

The tract at residues 8–30 (VASSQHRQHHSHQSLATPSSADS) is disordered. Residues 37-77 (CPICLEVYYKPVAIGSCGHTFCGECLQPCLQVSSPLCPLCR) form an RING-type zinc finger. Positions 102, 105, 117, and 121 each coordinate Zn(2+). A C2HC RNF-type zinc finger spans residues 102–121 (CRGCSKKVTLAKMRAHISSC). In terms of domain architecture, UIM spans 225–241 (DEEAALQAALALSLSEN).

The protein localises to the cytoplasm. The catalysed reaction is S-ubiquitinyl-[E2 ubiquitin-conjugating enzyme]-L-cysteine + [acceptor protein]-L-lysine = [E2 ubiquitin-conjugating enzyme]-L-cysteine + N(6)-ubiquitinyl-[acceptor protein]-L-lysine.. The protein operates within protein modification; protein ubiquitination. In terms of biological role, E3 ubiquitin-protein ligase that promotes the ubiquitination of different substrates. The protein is E3 ubiquitin-protein ligase RNF166 (rnf166) of Xenopus laevis (African clawed frog).